The sequence spans 572 residues: Oxygen-dependent choline dehydrogenase (572 aa).

7 to 36 contributes to the FAD binding site; that stretch reads DYIIIGAGSAGNVLATRLTEDRDVTVLLLE. The active-site Proton acceptor is His-474.

This sequence belongs to the GMC oxidoreductase family. Requires FAD as cofactor.

The catalysed reaction is choline + A = betaine aldehyde + AH2. The enzyme catalyses betaine aldehyde + NAD(+) + H2O = glycine betaine + NADH + 2 H(+). Its pathway is amine and polyamine biosynthesis; betaine biosynthesis via choline pathway; betaine aldehyde from choline (cytochrome c reductase route): step 1/1. In terms of biological role, involved in the biosynthesis of the osmoprotectant glycine betaine. Catalyzes the oxidation of choline to betaine aldehyde and betaine aldehyde to glycine betaine at the same rate. This Paraburkholderia phymatum (strain DSM 17167 / CIP 108236 / LMG 21445 / STM815) (Burkholderia phymatum) protein is Oxygen-dependent choline dehydrogenase.